Consider the following 608-residue polypeptide: Elongation factor 4 (608 aa).

One can recognise a tr-type G domain in the interval 11-193 (KKIRNFSIIA…QIVEKVPEPS (183 aa)). Residues 23 to 28 (DHGKST) and 140 to 143 (NKID) contribute to the GTP site.

Belongs to the TRAFAC class translation factor GTPase superfamily. Classic translation factor GTPase family. LepA subfamily.

It localises to the cell membrane. The enzyme catalyses GTP + H2O = GDP + phosphate + H(+). Its function is as follows. Required for accurate and efficient protein synthesis under certain stress conditions. May act as a fidelity factor of the translation reaction, by catalyzing a one-codon backward translocation of tRNAs on improperly translocated ribosomes. Back-translocation proceeds from a post-translocation (POST) complex to a pre-translocation (PRE) complex, thus giving elongation factor G a second chance to translocate the tRNAs correctly. Binds to ribosomes in a GTP-dependent manner. The protein is Elongation factor 4 of Listeria welshimeri serovar 6b (strain ATCC 35897 / DSM 20650 / CCUG 15529 / CIP 8149 / NCTC 11857 / SLCC 5334 / V8).